The chain runs to 1394 residues: Leucine-rich PPR motif-containing protein, mitochondrial (1394 aa).

The transit peptide at 1-59 (MAALLRSARWLLRAGAAPRLPLSLRLLPGGPGRLHAASYLPAARAGPVAGGLLSPARLY) directs the protein to the mitochondrion. PPR repeat units follow at residues 126 to 160 (LLRS…GAVY), 161 to 195 (DVSH…NIQP), 196 to 230 (NRVT…DLPV), 231 to 265 (TEAV…GIEP), 266 to 300 (GPDT…ELHL), 301 to 335 (MDRD…RRYI), 403 to 437 (HSFP…GFPI), and 438 to 472 (RPHY…GVHP). 3 positions are modified to N6-acetyllysine: Lys155, Lys187, and Lys226. Lys292 carries the N6-acetyllysine modification. N6-acetyllysine is present on residues Lys463 and Lys613. PPR repeat units lie at residues 678-709 (IRDV…ESDM), 710-746 (VTGG…SAVL), 747-784 (DTGK…IKDT), 785-820 (TALS…LAEP), 821-856 (STNI…KVLP), and 954-988 (RDQM…NVIP). Residues 712-1067 (GGYAALINLC…AKEQNIVFNA (356 aa)) form an interaction with BECN1 and Aedes aegypti venom allergen-1 region. An N6-acetyllysine mark is found at Lys726 and Lys750. A phosphoserine mark is found at Ser1026, Ser1027, and Ser1029. PPR repeat units lie at residues 1031 to 1065 (TEPD…NIVF), 1066 to 1102 (NAET…GFTL), 1103 to 1137 (NDAA…QQTP), 1138 to 1175 (SRLA…IGLS), 1176 to 1210 (KMVF…ENKV), and 1317 to 1351 (KEEA…NTKL). Positions 1121-1394 (KEAVTTLKTV…QLRKLRENSS (274 aa)) are RNA-binding. Thr1136 bears the Phosphothreonine mark. Ser1138 is subject to Phosphoserine.

In terms of assembly, component of mRNP complexes associated with HNRPA1. Component of the complex, at least composed of LRPPRC, BECN1 and BCL2; the interactions prevent BECN1 from forming an autophagy-inducing complex with PIK3C3. Interacts with CECR2, HEBP2, MAP1S and UXT. Interacts with PPARGC1A. Interacts with FOXO1. Interacts (via N-terminus) with EIF4E; the interaction promotes association of EIF4E with 4ESE-containing mRNAs. Interacts with exportin XPO1/CRM1; interacts both alone and in complex with EIF4E and 4ESE-containing mRNAs to form an EIF4E-dependent mRNA export complex. Interacts with importin IPO8; the interaction occurs when LRPPRC is in its RNA-free form and returns LRPPRC to the nucleus for further export rounds. Interacts with BECN1. Interacts with Aedes aegypti venom allergen-1; the interaction interrupts BECN1 and LRPPRC association. Expressed ubiquitously. Expression is highest in heart, skeletal muscle, kidney and liver, intermediate in brain, non-mucosal colon, spleen and placenta, and lowest in small intestine, thymus, lung and peripheral blood leukocytes.

The protein localises to the mitochondrion. It localises to the nucleus. It is found in the nucleoplasm. Its subcellular location is the nucleus inner membrane. The protein resides in the nucleus outer membrane. In terms of biological role, may play a role in RNA metabolism in both nuclei and mitochondria. In the nucleus binds to HNRPA1-associated poly(A) mRNAs and is part of nmRNP complexes at late stages of mRNA maturation which are possibly associated with nuclear mRNA export. Positively modulates nuclear export of mRNAs containing the EIF4E sensitivity element (4ESE) by binding simultaneously to both EIF4E and the 4ESE and acting as a platform for assembly for the RNA export complex. Also binds to exportin XPO1/CRM1 to engage the nuclear pore and traffic the bound mRNAs to the cytoplasm. May bind mature mRNA in the nucleus outer membrane. In mitochondria binds to poly(A) mRNA. Plays a role in translation or stability of mitochondrially encoded cytochrome c oxidase (COX) subunits. May be involved in transcription regulation. Cooperates with PPARGC1A to regulate certain mitochondrially encoded genes and gluconeogenic genes and may regulate docking of PPARGC1A to transcription factors. Seems to be involved in the transcription regulation of the multidrug-related genes MDR1 and MVP. Part of a nuclear factor that binds to the invMED1 element of MDR1 and MVP gene promoters. Binds single-stranded DNA. Required for maintaining mitochondrial potential. Suppresses the initiation of basal levels of autophagy and mitophagy by sustaining BCL2 levels. The sequence is that of Leucine-rich PPR motif-containing protein, mitochondrial (LRPPRC) from Homo sapiens (Human).